Consider the following 194-residue polypeptide: Small ribosomal subunit protein uS7 (194 aa).

The protein belongs to the universal ribosomal protein uS7 family. As to quaternary structure, part of the 30S ribosomal subunit.

Functionally, one of the primary rRNA binding proteins, it binds directly to 16S rRNA where it nucleates assembly of the head domain of the 30S subunit. Is located at the subunit interface close to the decoding center. This chain is Small ribosomal subunit protein uS7, found in Sulfurisphaera tokodaii (strain DSM 16993 / JCM 10545 / NBRC 100140 / 7) (Sulfolobus tokodaii).